Reading from the N-terminus, the 196-residue chain is Large ribosomal subunit protein eL15 (196 aa).

Composition is skewed to basic residues over residues 160–172 (ATRG…RKGR) and 186–196 (PSIRAHKSRGK). The interval 160–196 (ATRGKTSAGRKGRGMSTRGKGTEKTRPSIRAHKSRGK) is disordered.

Belongs to the eukaryotic ribosomal protein eL15 family.

In Methanosarcina mazei (strain ATCC BAA-159 / DSM 3647 / Goe1 / Go1 / JCM 11833 / OCM 88) (Methanosarcina frisia), this protein is Large ribosomal subunit protein eL15 (rpl15e).